A 704-amino-acid polypeptide reads, in one-letter code: Protein arginine N-methyltransferase 7 (704 aa).

SAM-dependent MTase PRMT-type domains are found at residues 14–356 and 366–704; these read ENTW…YSLW and SQPA…EKSE.

This sequence belongs to the class I-like SAM-binding methyltransferase superfamily. Protein arginine N-methyltransferase family. PRMT7 subfamily.

Essential arginine methyltransferase that can both catalyze the formation of omega-N monomethylarginine (MMA) and symmetrical dimethylarginine (sDMA). Specifically mediates the symmetrical dimethylation of arginine residues in the small nuclear ribonucleoproteins SmD1 and SmD3. This Drosophila grimshawi (Hawaiian fruit fly) protein is Protein arginine N-methyltransferase 7 (Art7).